Here is a 492-residue protein sequence, read N- to C-terminus: Putative cytochrome P450 136 (492 aa).

A heme-binding site is contributed by Cys439.

It belongs to the cytochrome P450 family. Heme is required as a cofactor.

The chain is Putative cytochrome P450 136 (cyp136) from Mycobacterium tuberculosis (strain CDC 1551 / Oshkosh).